Reading from the N-terminus, the 2766-residue chain is Thyroglobulin (2766 aa).

A signal peptide spans 1-20; sequence MTALVLWVSTLLSSVCLVAA. Tyr25 is modified (iodotyrosine; alternate). Position 25 is a sulfotyrosine; alternate (Tyr25). Tyr25 bears the Thyroxine; alternate mark. Tyr25 bears the Triiodothyronine; alternate mark. Thyroglobulin type-1 domains are found at residues 32-93, 94-161, 162-298, and 299-359; these read LRPC…PTVC, LSFC…PTRC, PRSC…RFRC, and PTKC…PPSC. 8 cysteine pairs are disulfide-bonded: Cys35–Cys53, Cys64–Cys71, Cys73–Cys93, Cys97–Cys121, Cys132–Cys139, Cys141–Cys161, Cys165–Cys184, and Cys195–Cys236. Tyr109 is subject to Iodotyrosine. N-linked (GlcNAc...) asparagine glycosylation is present at Asn111. Residue Tyr150 is modified to Iodotyrosine; alternate. A Diiodotyrosine; alternate modification is found at Tyr150. Asn199 is a glycosylation site (N-linked (GlcNAc...) asparagine). Iodotyrosine occurs at positions 235 and 259. 9 disulfide bridges follow: Cys302-Cys320, Cys331-Cys337, Cys339-Cys359, Cys365-Cys620, Cys408-Cys608, Cys631-Cys636, Cys638-Cys658, Cys662-Cys687, and Cys698-Cys703. N-linked (GlcNAc...) asparagine glycans are attached at residues Asn484 and Asn496. Thyroglobulin type-1 domains follow at residues 605–658, 659–726, 727–922, 923–1074, 1075–1146, and 1147–1211; these read AQAC…RPRC, PTKC…AKQC, PSVC…IPAC, PGPC…MPQC, PTNC…SAQC, and PGLC…QPAC. Residue Tyr704 is modified to Iodotyrosine; alternate. Tyr704 carries the post-translational modification Thyroxine; alternate. The residue at position 704 (Tyr704) is a Triiodothyronine; alternate. A Diiodotyrosine; alternate modification is found at Tyr704. 16 disulfides stabilise this stretch: Cys705–Cys726, Cys730–Cys763, Cys774–Cys899, Cys901–Cys922, Cys926–Cys1032, Cys1043–Cys1050, Cys1052–Cys1074, Cys1078–Cys1109, Cys1127–Cys1146, Cys1150–Cys1170, Cys1182–Cys1189, Cys1191–Cys1211, Cys1216–Cys1265, Cys1232–Cys1246, Cys1306–Cys1356, and Cys1331–Cys1347. N-linked (GlcNAc...) asparagine glycosylation occurs at Asn748. An Iodotyrosine modification is found at Tyr785. Residue Asn817 is glycosylated (N-linked (GlcNAc...) asparagine). At Tyr867 the chain carries Iodotyrosine; alternate. Tyr867 is modified (diiodotyrosine; alternate). Diiodotyrosine is present on Tyr884. N-linked (GlcNAc...) asparagine glycosylation occurs at Asn948. Residue Tyr993 is modified to Iodotyrosine; alternate. Tyr993 bears the Diiodotyrosine; alternate mark. N-linked (GlcNAc...) asparagine glycosylation occurs at Asn1141. Position 1310 is an iodotyrosine (Tyr1310). At Tyr1310 the chain carries Thyroxine. N-linked (GlcNAc...) asparagine glycans are attached at residues Asn1349 and Asn1365. Cystine bridges form between Cys1441–Cys1458, Cys1461–Cys1472, Cys1475–Cys1489, Cys1492–Cys1509, Cys1513–Cys1522, Cys1542–Cys1564, Cys1602–Cys1626, Cys1606–Cys1612, and Cys1638–Cys1661. Type II repeat units follow at residues 1455-1468, 1469-1485, and 1486-1502; these read ALGCVKCPEGSFSQ, DGRCTPCPAGTYQEQAG, and SSACIPCPRGRTTITTG. The 55-residue stretch at 1510 to 1564 folds into the Thyroglobulin type-1 11 domain; sequence VTDCQKNEAGLQCDQNGQYQASQKNRDSGEVFCVDSEGRKLQWLQTEAGLSESQC. One copy of the Type IIIA repeat lies at 1602 to 1722; that stretch reads CLTDCANDEA…GANLTDTHTY (121 aa). N-linked (GlcNAc...) asparagine glycans are attached at residues Asn1715, Asn1729, Asn1773, and Asn1864. 4 disulfides stabilise this stretch: Cys1723-Cys1748, Cys1727-Cys1733, Cys1732-Cys1834, and Cys1759-Cys1776. One copy of the Type IIIB repeat lies at 1723 to 1889; the sequence is CLLACDNDSC…LFSAEQANLW (167 aa). 7 cysteine pairs are disulfide-bonded: Cys1890–Cys1916, Cys1894–Cys1901, Cys1925–Cys1936, Cys1993–Cys2021, Cys1997–Cys2003, Cys2002–Cys2073, and Cys2032–Cys2045. One copy of the Type IIIA repeat lies at 1890–1992; sequence CLSRCAQEPI…GKLISNGFFE (103 aa). N-linked (GlcNAc...) asparagine glycosylation is present at Asn1935. The Type IIIB repeat unit spans residues 1993 to 2125; it reads CERLCDRDPC…AATSNFSMAQ (133 aa). A glycan (N-linked (GlcNAc...) asparagine) is linked at Asn2010. Asn2120 carries N-linked (GlcNAc...) asparagine glycosylation. One copy of the Type IIIA repeat lies at 2126 to 2183; the sequence is DFCLQQCSRHQDCLVTTLQIQPGVVRCVFYPDIQNCIHSLRSHTCWLLLHEEATYIYR. Cystine bridges form between Cys2128-Cys2152, Cys2132-Cys2138, and Cys2161-Cys2170. Tyr2182 is subject to Iodotyrosine. Residues 2186–2766 form a cholinesterase-like (ChEL) region; sequence GIPLVQSDVT…LEPVPKSYSK (581 aa). Asn2249 carries N-linked (GlcNAc...) asparagine glycosylation. Cys2263 and Cys2280 are disulfide-bonded. A glycan (N-linked (GlcNAc...) asparagine) is linked at Asn2294. Cys2441 and Cys2452 are oxidised to a cystine. Tyr2539 carries the thyroxine modification. Iodotyrosine; alternate is present on Tyr2572. Tyr2572 carries the thyroxine; alternate modification. The residue at position 2572 (Tyr2572) is a Triiodothyronine; alternate. Tyr2572 is subject to Diiodotyrosine; alternate. Asn2581 is a glycosylation site (N-linked (GlcNAc...) asparagine). Tyr2586 and Tyr2616 each carry iodotyrosine. The cysteines at positions 2590 and 2714 are disulfide-linked. The residue at position 2696 (Tyr2696) is a Diiodotyrosine. The tract at residues 2729 to 2766 is disordered; the sequence is GAKDAQLTKSEEEDLEVGPGLEEDLSGSLEPVPKSYSK. Acidic residues predominate over residues 2739–2753; the sequence is EEEDLEVGPGLEEDL. Tyr2764 is modified (iodotyrosine; alternate). Tyr2764 is modified (thyroxine; alternate). Tyr2764 bears the Triiodothyronine; alternate mark. Residue Tyr2764 is modified to Diiodotyrosine; alternate.

The protein belongs to the type-B carboxylesterase/lipase family. In terms of assembly, monomer. Homodimer (via ChEL region); occurs in the endoplasmic reticulum and is required for export to the Golgi apparatus. Homooligomer; disulfide-linked; stored in this form in the thyroid follicle lumen. Post-translationally, iodinated on tyrosine residues by TPO. There are 4 pairs of iodinated tyrosines used for coupling: acceptor Tyr-25 is coupled to donor Tyr-150 or Tyr-235, acceptor Tyr-2572 is coupled to donor Tyr-2539, acceptor Tyr-2764 in monomer 1 is coupled to donor Tyr-2764 in monomer 2 and acceptor Tyr-1310 in monomer 1 is coupled to donor Tyr-109 in monomer 2. Sulfated tyrosines are desulfated during iodination. In terms of processing, undergoes sequential proteolysis by cathepsins to release thyroxine (T4) and triiodothyronine (T3) hormones. In the thyroid follicle lumen, cross-linked TG (storage form) is solubilized by limited proteolysis mediated by cathepsins CTSB and/or CTSL. Partially cleaved TG is further processed by CTSK/cathepsin K and/or CTSL resulting in the release of T4. Following endocytosis, further processing occurs leading to the release of T3 and more T4 hormones. In terms of tissue distribution, specifically expressed in the thyroid gland.

The protein localises to the secreted. Acts as a substrate for the production of iodinated thyroid hormones thyroxine (T4) and triiodothyronine (T3). The synthesis of T3 and T4 involves iodination of selected tyrosine residues of TG/thyroglobulin followed by their oxidative coupling. Following TG re-internalization and lysosomal-mediated proteolysis, T3 and T4 are released from the polypeptide backbone leading to their secretion into the bloodstream. One dimer produces 7 thyroid hormone molecules. This is Thyroglobulin (Tg) from Mus musculus (Mouse).